The primary structure comprises 287 residues: Short-chain dehydrogenase virD (287 aa).

NADP(+) is bound by residues V10, T36, D57, N85, Y149, K153, V182, and T184. The Proton acceptor role is filled by Y149. The active-site Lowers pKa of active site Tyr is the K153.

This sequence belongs to the short-chain dehydrogenases/reductases (SDR) family.

It participates in secondary metabolite biosynthesis. Functionally, short-chain dehydrogenase; part of the gene cluster that mediates the biosynthesis of virensols and trichoxide, fungal natural products that contain or are derived from a salicylaldehyde core. The pathway begins with the synthesis of the reduced chain in virensol C by the highly reducing polyketide synthase virA via condensation of one acetate and 8 malonate units. VirA has interesting programming rules since the first 2 ketides are fully reduced, the 3 following ketides undergo beta-dehydration, and the last 3 ketides are only reduced to beta-hydroxys to yield the trihydroxy portion. The production of aldehyde virensol C by virA alone is surprising, since virA does not contain a reductase (R) domain that is typically associated with reductive product release in HRPKS. The cupin-domain enzyme virC is involved in enhancing virA product turnover. The short-chain dehydrogenase virB then oxidizes the C-7 alcohol of virensol C to a ketone, yielding virensol D. Virensol D is further transformed to salicylaldehyde 5-deoxyaurocitrin by the short-chain dehydrogenase virD. VirD catalyzes the dehydrogenation of C-3 to form the beta-ketone aldehyde, which is followed by the generation of the nucleophilic C-2 that is required for the intramolecular aldol condensation between C-2 and C-7, itself followed by dehydration and aromatization which leads to salicylaldehyde 5-deoxyaurocitrin. While the dehydrogenation of virensol D is definitely catalyzed by virD, the aldol condensation and dehydration may be uncatalyzed or assisted by virD. The short chain dehydrogenase virG then converts salicylaldehyde 5-deoxyaurocitrin into virensol B which is further hydroxylated by the cytochrome P450 monooxygenase virE to yield the hydroquinone virensol A. VirI then may oxidize virensol A to form the quinone, while virH performs the epoxidation. Finally, the two remaining short-chain dehydrogenases, virK and virL, are probably responsible for reducing the ketones to the corresponding alcohols to furnish the epoxycyclohexanol structure in trichoxide. This Hypocrea virens (strain Gv29-8 / FGSC 10586) (Gliocladium virens) protein is Short-chain dehydrogenase virD.